The primary structure comprises 197 residues: Large ribosomal subunit protein bL17 (197 aa).

The disordered stretch occupies residues 136-197 (RAAKKADAPQ…DAEKSSDTEK (62 aa)). Acidic residues predominate over residues 148–187 (VADEATDADESVEDEAPAQDDSADEVEAAADETPADDAEA). Residues 188–197 (DAEKSSDTEK) are compositionally biased toward basic and acidic residues.

This sequence belongs to the bacterial ribosomal protein bL17 family. In terms of assembly, part of the 50S ribosomal subunit. Contacts protein L32.

The chain is Large ribosomal subunit protein bL17 from Beutenbergia cavernae (strain ATCC BAA-8 / DSM 12333 / CCUG 43141 / JCM 11478 / NBRC 16432 / NCIMB 13614 / HKI 0122).